We begin with the raw amino-acid sequence, 98 residues long: Large ribosomal subunit protein uL23 (98 aa).

Belongs to the universal ribosomal protein uL23 family. Part of the 50S ribosomal subunit. Contacts protein L29, and trigger factor when it is bound to the ribosome.

Its function is as follows. One of the early assembly proteins it binds 23S rRNA. One of the proteins that surrounds the polypeptide exit tunnel on the outside of the ribosome. Forms the main docking site for trigger factor binding to the ribosome. The sequence is that of Large ribosomal subunit protein uL23 from Thioalkalivibrio sulfidiphilus (strain HL-EbGR7).